Consider the following 60-residue polypeptide: Large ribosomal subunit protein bL32 (60 aa).

The span at 1–23 shows a compositional bias: basic residues; the sequence is MACPKKKTSNAKRDQRRAHWRKQ. The segment at 1–60 is disordered; it reads MACPKKKTSNAKRDQRRAHWRKQAAREAQKALSLGKSVLSGRSNSFVYPTKEEEEGEDEE.

This sequence belongs to the bacterial ribosomal protein bL32 family.

The polypeptide is Large ribosomal subunit protein bL32 (Microcystis aeruginosa (strain NIES-843 / IAM M-2473)).